Here is a 541-residue protein sequence, read N- to C-terminus: Formimidoyltransferase-cyclodeaminase (541 aa).

Residues 1–181 (MSQLVECVPN…GATVAGARKF (181 aa)) are formiminotransferase N-subdomain. His-82 (for formimidoyltransferase activity) is an active-site residue. A folate-binding site is contributed by 163 to 172 (GPSAFVPSWG). Residues 182 to 326 (LLAFNINLLS…PKERIIEYLV (145 aa)) form a formiminotransferase C-subdomain region. Residues 327-334 (PEAGPEQS) form a linker region. Residues 335–541 (LLHKPLRTFV…VLDRLEARQA (207 aa)) form a cyclodeaminase/cyclohydrolase region. Residue Asp-412 is the For cyclodeaminase activity of the active site. Ser-520 is subject to Phosphoserine.

It in the C-terminal section; belongs to the cyclodeaminase/cyclohydrolase family. The protein in the N-terminal section; belongs to the formiminotransferase family. As to quaternary structure, homooctamer, including four polyglutamate binding sites. The subunits are arranged as a tetramer of dimers, and form a planar ring-shaped structure.

Its subcellular location is the cytoplasm. The protein resides in the cytosol. It is found in the golgi apparatus. It localises to the cytoskeleton. The protein localises to the microtubule organizing center. Its subcellular location is the centrosome. The protein resides in the centriole. The catalysed reaction is 5-formimidoyltetrahydrofolate + L-glutamate = N-formimidoyl-L-glutamate + (6S)-5,6,7,8-tetrahydrofolate. The enzyme catalyses 5-formimidoyltetrahydrofolate + 2 H(+) = (6R)-5,10-methenyltetrahydrofolate + NH4(+). It functions in the pathway amino-acid degradation; L-histidine degradation into L-glutamate; L-glutamate from N-formimidoyl-L-glutamate (transferase route): step 1/1. Functionally, folate-dependent enzyme, that displays both transferase and deaminase activity. Serves to channel one-carbon units from formiminoglutamate to the folate pool. Its function is as follows. Binds and promotes bundling of vimentin filaments originating from the Golgi. In Sus scrofa (Pig), this protein is Formimidoyltransferase-cyclodeaminase (FTCD).